We begin with the raw amino-acid sequence, 3933 residues long: Circularly permutated Ras protein 2 (3933 aa).

The stretch at 12 to 46 (VHEVKKQELESILLQQEQEKQAKEEKESIKDTDDK) forms a coiled coil. 4 disordered regions span residues 23-101 (ILLQ…IEKK), 136-189 (DIRE…RKET), 1022-1054 (ITTT…TTTT), and 2817-2839 (NNNN…RPTR). Basic and acidic residues predominate over residues 28–62 (EQEKQAKEEKESIKDTDDKPIEDTEHSTNNDKPIE). Over residues 70-92 (TPTTTTTTKPTDEASSSSNNNNN) the composition is skewed to low complexity. Residues 136-145 (DIREPTDKPF) are compositionally biased toward basic and acidic residues. Positions 146–156 (ENTSNIETTRQ) are enriched in polar residues. Residues 167 to 215 (KTEAERLEQEQKQKQYDENRKETDRKLELELERLKNKKEEVEQIRAYFQ) are a coiled coil. Over residues 168–189 (TEAERLEQEQKQKQYDENRKET) the composition is skewed to basic and acidic residues. Residues 2817–2826 (NNNNNNNRYN) are compositionally biased toward low complexity. GTP is bound by residues 2853–2857 (DTAGQ), 2913–2916 (TKAD), and 2976–2983 (GDGGIGKS). Disordered stretches follow at residues 3036–3086 (LQSA…LSSR), 3107–3142 (RKSS…QDYE), and 3733–3754 (VIEP…PSSS). Residues 3070–3086 (PSSSSTRTSVSTSLSSR) show a composition bias toward low complexity. The segment covering 3107-3120 (RKSSLVEEESKRQY) has biased composition (basic and acidic residues). Residues 3121–3141 (DDDDESKSESSEYDDDDDQDY) are compositionally biased toward acidic residues.

The protein belongs to the small GTPase superfamily. CpRas family.

The sequence is that of Circularly permutated Ras protein 2 (cpras2) from Dictyostelium discoideum (Social amoeba).